Reading from the N-terminus, the 100-residue chain is Large ribosomal subunit protein bL21 (100 aa).

This sequence belongs to the bacterial ribosomal protein bL21 family. In terms of assembly, part of the 50S ribosomal subunit. Contacts protein L20.

This protein binds to 23S rRNA in the presence of protein L20. This Deinococcus deserti (strain DSM 17065 / CIP 109153 / LMG 22923 / VCD115) protein is Large ribosomal subunit protein bL21.